We begin with the raw amino-acid sequence, 395 residues long: Succinyl-diaminopimelate desuccinylase (395 aa).

His-74 provides a ligand contact to Zn(2+). Asp-76 is an active-site residue. Asp-107 contacts Zn(2+). Glu-141 functions as the Proton acceptor in the catalytic mechanism. Zn(2+) is bound by residues Glu-142, Glu-170, and His-368.

Belongs to the peptidase M20A family. DapE subfamily. In terms of assembly, homodimer. The cofactor is Zn(2+). It depends on Co(2+) as a cofactor.

It carries out the reaction N-succinyl-(2S,6S)-2,6-diaminopimelate + H2O = (2S,6S)-2,6-diaminopimelate + succinate. It participates in amino-acid biosynthesis; L-lysine biosynthesis via DAP pathway; LL-2,6-diaminopimelate from (S)-tetrahydrodipicolinate (succinylase route): step 3/3. Catalyzes the hydrolysis of N-succinyl-L,L-diaminopimelic acid (SDAP), forming succinate and LL-2,6-diaminopimelate (DAP), an intermediate involved in the bacterial biosynthesis of lysine and meso-diaminopimelic acid, an essential component of bacterial cell walls. This Brucella anthropi (strain ATCC 49188 / DSM 6882 / CCUG 24695 / JCM 21032 / LMG 3331 / NBRC 15819 / NCTC 12168 / Alc 37) (Ochrobactrum anthropi) protein is Succinyl-diaminopimelate desuccinylase.